A 313-amino-acid chain; its full sequence is Carbamate kinase 2 (313 aa).

It belongs to the carbamate kinase family.

The protein resides in the cytoplasm. The catalysed reaction is hydrogencarbonate + NH4(+) + ATP = carbamoyl phosphate + ADP + H2O + H(+). The protein operates within metabolic intermediate metabolism; carbamoyl phosphate degradation; CO(2) and NH(3) from carbamoyl phosphate: step 1/1. In Staphylococcus aureus (strain Mu50 / ATCC 700699), this protein is Carbamate kinase 2 (arcC2).